Here is a 124-residue protein sequence, read N- to C-terminus: Cytochrome c oxidase subunit 4 isoform 1, mitochondrial (124 aa).

Lys4 is modified (N6-acetyllysine; alternate). The residue at position 4 (Lys4) is an N6-succinyllysine; alternate. A phosphoserine mark is found at Ser31 and Ser33. Residue Lys35 is modified to N6-acetyllysine; alternate. Lys35 is modified (N6-succinyllysine; alternate). An N6-acetyllysine modification is found at Lys42.

Belongs to the cytochrome c oxidase IV family. In terms of assembly, component of the cytochrome c oxidase (complex IV, CIV), a multisubunit enzyme composed of 14 subunits. The complex is composed of a catalytic core of 3 subunits MT-CO1, MT-CO2 and MT-CO3, encoded in the mitochondrial DNA, and 11 supernumerary subunits COX4I, COX5A, COX5B, COX6A, COX6B, COX6C, COX7A, COX7B, COX7C, COX8 and NDUFA4, which are encoded in the nuclear genome. The complex exists as a monomer or a dimer and forms supercomplexes (SCs) in the inner mitochondrial membrane with NADH-ubiquinone oxidoreductase (complex I, CI) and ubiquinol-cytochrome c oxidoreductase (cytochrome b-c1 complex, complex III, CIII), resulting in different assemblies (supercomplex SCI(1)III(2)IV(1) and megacomplex MCI(2)III(2)IV(2)). Interacts with PHB2; the interaction decreases in absence of SPHK2. Interacts with AFG1L. Interacts with ABCB7; this interaction allows the regulation of cellular iron homeostasis and cellular reactive oxygen species (ROS) levels in cardiomyocytes. Interacts with FLVCR2; this interaction occurs in the absence of heme and is disrupted upon heme binding. Interacts with IRGC.

It localises to the mitochondrion inner membrane. It functions in the pathway energy metabolism; oxidative phosphorylation. Component of the cytochrome c oxidase, the last enzyme in the mitochondrial electron transport chain which drives oxidative phosphorylation. The respiratory chain contains 3 multisubunit complexes succinate dehydrogenase (complex II, CII), ubiquinol-cytochrome c oxidoreductase (cytochrome b-c1 complex, complex III, CIII) and cytochrome c oxidase (complex IV, CIV), that cooperate to transfer electrons derived from NADH and succinate to molecular oxygen, creating an electrochemical gradient over the inner membrane that drives transmembrane transport and the ATP synthase. Cytochrome c oxidase is the component of the respiratory chain that catalyzes the reduction of oxygen to water. Electrons originating from reduced cytochrome c in the intermembrane space (IMS) are transferred via the dinuclear copper A center (CU(A)) of subunit 2 and heme A of subunit 1 to the active site in subunit 1, a binuclear center (BNC) formed by heme A3 and copper B (CU(B)). The BNC reduces molecular oxygen to 2 water molecules using 4 electrons from cytochrome c in the IMS and 4 protons from the mitochondrial matrix. The sequence is that of Cytochrome c oxidase subunit 4 isoform 1, mitochondrial (COX4I1) from Saimiri sciureus (Common squirrel monkey).